Consider the following 128-residue polypeptide: uncharacterized protein (128 aa).

The S1 motif domain occupies 6–74 (GSKLQGKITG…KDGKIGLSIK (69 aa)). Residues 72 to 128 (SIKKAKDRPQARPRNDFRPKESFEQKMNKFLKDSEDRLSSLKRNTESKRGGRGARRG) are disordered. Over residues 78–120 (DRPQARPRNDFRPKESFEQKMNKFLKDSEDRLSSLKRNTESKR) the composition is skewed to basic and acidic residues.

The protein belongs to the peptidase U57 family.

This is an uncharacterized protein from Bacillus subtilis (strain 168).